The sequence spans 476 residues: Ubiquinone biosynthesis monooxygenase COQ6, mitochondrial (476 aa).

The transit peptide at 1–35 (MAARIGSMAGLLCVRWWSSAQLAARGGPLVASQRW) directs the protein to the mitochondrion. At K219 the chain carries N6-succinyllysine.

This sequence belongs to the UbiH/COQ6 family. Component of a multi-subunit COQ enzyme complex, composed of at least COQ3, COQ4, COQ5, COQ6, COQ7 and COQ9. Interacts with COQ8B and COQ7. Requires FAD as cofactor. As to expression, expressed in the kidney, in podocytes.

It localises to the mitochondrion inner membrane. The protein localises to the golgi apparatus. It is found in the cell projection. It catalyses the reaction 4-hydroxy-3-(all-trans-decaprenyl)benzoate + 2 reduced [2Fe-2S]-[ferredoxin] + O2 + 2 H(+) = 3,4-dihydroxy-5-(all-trans-decaprenyl)benzoate + 2 oxidized [2Fe-2S]-[ferredoxin] + H2O. The enzyme catalyses 2-methoxy-6-(all-trans-decaprenyl)phenol + 2 reduced [2Fe-2S]-[ferredoxin] + O2 + 2 H(+) = 2-methoxy-6-(all-trans-decaprenyl)benzene-1,4-diol + 2 oxidized [2Fe-2S]-[ferredoxin] + H2O. It functions in the pathway cofactor biosynthesis; ubiquinone biosynthesis. Its function is as follows. FAD-dependent monooxygenase required for two non-consecutive steps during ubiquinone biosynthesis. Required for the C5-ring hydroxylation during ubiquinone biosynthesis by catalyzing the hydroxylation of 4-hydroxy-3-(all-trans-decaprenyl)benzoic acid to 3,4-dihydroxy-5-(all-trans-decaprenyl)benzoic acid. Also acts downstream of COQ4, for the C1-hydroxylation during ubiquinone biosynthesis by catalyzing the hydroxylation of 2-methoxy-6-(all-trans-decaprenyl)phenol to 2-methoxy-6-(all-trans-decaprenyl)benzene-1,4-diol. The electrons required for the hydroxylation reaction are funneled indirectly to COQ6 from NADPH via a ferredoxin/ferredoxin reductase system composed of FDX2 and FDXR. The chain is Ubiquinone biosynthesis monooxygenase COQ6, mitochondrial from Mus musculus (Mouse).